The sequence spans 155 residues: MGLSGVLHVEVEVKSPAEKFWVALGDGINLFPKAFPNDYKTIQVLAGDGNAPGSIRLITYGEGSPLVKISAERIEAVDLENKSMSYSIIGGEMLEYYKTFKGTITVIPKDGGSLLKWSGEFEKTAHEIDDPHVIKDFAVKNFKEIDEYLLKQTSA.

This sequence belongs to the MLP family.

The sequence is that of MLP-like protein 423 (MLP423) from Arabidopsis thaliana (Mouse-ear cress).